The chain runs to 138 residues: Large ribosomal subunit protein uL16c (138 aa).

It belongs to the universal ribosomal protein uL16 family. As to quaternary structure, part of the 50S ribosomal subunit.

It is found in the plastid. It localises to the chloroplast. The protein is Large ribosomal subunit protein uL16c of Phaeodactylum tricornutum (strain CCAP 1055/1).